A 134-amino-acid polypeptide reads, in one-letter code: Complexin-2 (134 aa).

Residues 1-114 (MDFVMKQALG…CGDEDEEDEE (114 aa)) form a disordered region. Residues 15–85 (DMGKMLGGDE…EEKEAEEKAA (71 aa)) are compositionally biased toward basic and acidic residues. Residues 29–84 (DAQKKEEERQEALRQQEDERKQKHIRMETEREKVRQQIRDKYGLKKKEEKEAEEKA) are a coiled coil.

Belongs to the complexin/synaphin family. Binds to the SNARE core complex containing SNAP25, VAMP2 and STX1A. As to expression, nervous system. Present in electric organ (at protein level).

It is found in the cytoplasm. It localises to the cytosol. Its subcellular location is the presynapse. The protein localises to the nucleus. The protein resides in the perikaryon. Positively regulates a late step in synaptic vesicle exocytosis. The sequence is that of Complexin-2 from Narke japonica (Japanese sleeper ray).